The primary structure comprises 403 residues: Tripartite motif-containing protein 59 (403 aa).

The RING-type zinc finger occupies 10–60 (CPICYSIFEDPRVLPCSHTFCRNCLENILQASGNFYIWRPLRIPLKCPNCR). The B box-type zinc finger occupies 92–134 (PDIVTCPEHYRQPLNVYCLLDKKLVCGHCLTIGQHHGHPIDDL). Residues C97, H100, C120, and H126 each contribute to the Zn(2+) site. Residues 163-246 (LIEKLKEQKS…ALTISLQEES (84 aa)) adopt a coiled-coil conformation. The chain crosses the membrane as a helical span at residues 329 to 349 (ILNIVVVTLISVILMSILFFN).

The protein belongs to the TRIM/RBCC family. In terms of assembly, interacts with ECSIT.

Its subcellular location is the endoplasmic reticulum membrane. The enzyme catalyses S-ubiquitinyl-[E2 ubiquitin-conjugating enzyme]-L-cysteine + [acceptor protein]-L-lysine = [E2 ubiquitin-conjugating enzyme]-L-cysteine + N(6)-ubiquitinyl-[acceptor protein]-L-lysine.. The protein operates within protein modification; protein ubiquitination. Functionally, E3 ubiquitin ligase involved in different processes such as development and immune response. Serves as a negative regulator for innate immune signaling pathways by suppressing RLR-induced activation of IRF3/7 and NF-kappa-B via interaction with adapter ECSIT. Regulates autophagy through modulating both the transcription and the ubiquitination of BECN1. On the one hand, regulates the transcription of BECN1 through negatively modulating the NF-kappa-B pathway. On the other hand, regulates TRAF6-mediated 'Lys-63'-linked ubiquitination of BECN1, thus affecting the formation of the BECN1-PIK3C3 complex. In addition, mediates 'Lys-48'-linked ubiquitination of TRAF6 and thereby promotes TRAF6 proteasomal degradation. Also acts as a critical regulator for early embryo development from blastocyst stage to gastrula through modulating F-actin assembly and WASH1 'Lys-63'-linked ubiquitination. The sequence is that of Tripartite motif-containing protein 59 (TRIM59) from Homo sapiens (Human).